Reading from the N-terminus, the 594-residue chain is UvrABC system protein C (594 aa).

Positions 17–94 (LEPGCYLMKD…IKQYQPRYNI (78 aa)) constitute a GIY-YIG domain. A UVR domain is found at 199–234 (KTILNHLEERMNKASEQLDFEQAKEYRDMIQHIHNL).

The protein belongs to the UvrC family. As to quaternary structure, interacts with UvrB in an incision complex.

It is found in the cytoplasm. In terms of biological role, the UvrABC repair system catalyzes the recognition and processing of DNA lesions. UvrC both incises the 5' and 3' sides of the lesion. The N-terminal half is responsible for the 3' incision and the C-terminal half is responsible for the 5' incision. This chain is UvrABC system protein C, found in Staphylococcus epidermidis (strain ATCC 35984 / DSM 28319 / BCRC 17069 / CCUG 31568 / BM 3577 / RP62A).